A 221-amino-acid polypeptide reads, in one-letter code: MALPNQQTVDYPSFKLVIVGDGGTGKTTFVKRHLTGEFEKKYEPTIGVEVHPLDFFTNCGKIRFYCWDTAGQEKFGGLRDGYYIHGQCAIIMFDVTARLTYKNVPTWHRDLCRVCENIPIVLCGNKVDVKNRQVKAKQVTFHRKKNLQYYEISAKSNYNFEKPFLYLARKLAGDANLHFVESPALAPPEVQIDLAAQQLHEQELLQAAAHALPDDDDEAFE.

A Small GTPase Ran-type domain is found at 10–174; sequence DYPSFKLVIV…LYLARKLAGD (165 aa). 21–28 contacts GTP; that stretch reads DGGTGKTT. The tract at residues 40 to 48 is switch-I; the sequence is KKYEPTIGV. Residues G71, 125–128, and 153–155 contribute to the GTP site; these read NKVD and SAK. The segment at 71–87 is switch-II; that stretch reads GQEKFGGLRDGYYIHGQ.

This sequence belongs to the small GTPase superfamily. Ran family. In terms of assembly, found in a nuclear export complex with RanGTP, exportin and pre-miRNA.

Its subcellular location is the nucleus. Its function is as follows. GTP-binding protein involved in nucleocytoplasmic transport. Required for the import of protein into the nucleus and also for RNA export. Involved in chromatin condensation and control of cell cycle. The sequence is that of GTP-binding nuclear protein Ran-B1 (RAN-B1) from Nicotiana tabacum (Common tobacco).